A 399-amino-acid chain; its full sequence is Bifunctional enzyme IspD/IspF (399 aa).

The segment at 1 to 239 (MHTWALLLAA…SSEKKNMQVP (239 aa)) is 2-C-methyl-D-erythritol 4-phosphate cytidylyltransferase. Positions 240–399 (CVGWGYDVHR…AVTALRRVSS (160 aa)) are 2-C-methyl-D-erythritol 2,4-cyclodiphosphate synthase. A divalent metal cation contacts are provided by D246 and H248. 4-CDP-2-C-methyl-D-erythritol 2-phosphate contacts are provided by residues 246–248 (DVH) and 273–274 (HS). H281 provides a ligand contact to a divalent metal cation. 4-CDP-2-C-methyl-D-erythritol 2-phosphate-binding positions include 295-297 (DIG), 300-304 (FPDTD), 371-374 (TTEE), and F378.

The protein in the N-terminal section; belongs to the IspD/TarI cytidylyltransferase family. IspD subfamily. This sequence in the C-terminal section; belongs to the IspF family. A divalent metal cation is required as a cofactor.

The enzyme catalyses 2-C-methyl-D-erythritol 4-phosphate + CTP + H(+) = 4-CDP-2-C-methyl-D-erythritol + diphosphate. It carries out the reaction 4-CDP-2-C-methyl-D-erythritol 2-phosphate = 2-C-methyl-D-erythritol 2,4-cyclic diphosphate + CMP. Its pathway is isoprenoid biosynthesis; isopentenyl diphosphate biosynthesis via DXP pathway; isopentenyl diphosphate from 1-deoxy-D-xylulose 5-phosphate: step 2/6. The protein operates within isoprenoid biosynthesis; isopentenyl diphosphate biosynthesis via DXP pathway; isopentenyl diphosphate from 1-deoxy-D-xylulose 5-phosphate: step 4/6. Its function is as follows. Bifunctional enzyme that catalyzes the formation of 4-diphosphocytidyl-2-C-methyl-D-erythritol from CTP and 2-C-methyl-D-erythritol 4-phosphate (MEP) (IspD), and catalyzes the conversion of 4-diphosphocytidyl-2-C-methyl-D-erythritol 2-phosphate (CDP-ME2P) to 2-C-methyl-D-erythritol 2,4-cyclodiphosphate (ME-CPP) with a corresponding release of cytidine 5-monophosphate (CMP) (IspF). This Oleidesulfovibrio alaskensis (strain ATCC BAA-1058 / DSM 17464 / G20) (Desulfovibrio alaskensis) protein is Bifunctional enzyme IspD/IspF.